The following is a 149-amino-acid chain: Putative pre-16S rRNA nuclease (149 aa).

It belongs to the YqgF nuclease family.

It is found in the cytoplasm. Functionally, could be a nuclease involved in processing of the 5'-end of pre-16S rRNA. The chain is Putative pre-16S rRNA nuclease from Burkholderia lata (strain ATCC 17760 / DSM 23089 / LMG 22485 / NCIMB 9086 / R18194 / 383).